A 466-amino-acid chain; its full sequence is Uronate isomerase (466 aa).

This sequence belongs to the metallo-dependent hydrolases superfamily. Uronate isomerase family.

The catalysed reaction is D-glucuronate = D-fructuronate. It catalyses the reaction aldehydo-D-galacturonate = keto-D-tagaturonate. Its pathway is carbohydrate metabolism; pentose and glucuronate interconversion. In Clostridium perfringens (strain 13 / Type A), this protein is Uronate isomerase.